The following is a 153-amino-acid chain: Urease accessory protein UreE (153 aa).

This sequence belongs to the UreE family.

It localises to the cytoplasm. Involved in urease metallocenter assembly. Binds nickel. Probably functions as a nickel donor during metallocenter assembly. The chain is Urease accessory protein UreE from Acetivibrio thermocellus (strain ATCC 27405 / DSM 1237 / JCM 9322 / NBRC 103400 / NCIMB 10682 / NRRL B-4536 / VPI 7372) (Clostridium thermocellum).